The primary structure comprises 450 residues: Folate synthesis bifunctional protein (450 aa).

Residues 1–166 form an HPPK region; that stretch reads MTSWNFVCLS…TFAELAAIYP (166 aa). The Pterin-binding domain maps to 180-441; the sequence is TQIMGIVNIT…QVEGNRRALA (262 aa). Residues 182-450 are DHPS; it reads IMGIVNITDN…AAAAWAGMFV (269 aa). Residue Asn187 participates in Mg(2+) binding. (7,8-dihydropterin-6-yl)methyl diphosphate is bound by residues Thr227, Asp267, Asn287, Asp358, Lys395, and 429-431; that span reads RVH.

It in the C-terminal section; belongs to the DHPS family. In the N-terminal section; belongs to the HPPK family. Mg(2+) is required as a cofactor.

The enzyme catalyses 6-hydroxymethyl-7,8-dihydropterin + ATP = (7,8-dihydropterin-6-yl)methyl diphosphate + AMP + H(+). It carries out the reaction (7,8-dihydropterin-6-yl)methyl diphosphate + 4-aminobenzoate = 7,8-dihydropteroate + diphosphate. Its pathway is cofactor biosynthesis; tetrahydrofolate biosynthesis; 2-amino-4-hydroxy-6-hydroxymethyl-7,8-dihydropteridine diphosphate from 7,8-dihydroneopterin triphosphate: step 4/4. It participates in cofactor biosynthesis; tetrahydrofolate biosynthesis; 7,8-dihydrofolate from 2-amino-4-hydroxy-6-hydroxymethyl-7,8-dihydropteridine diphosphate and 4-aminobenzoate: step 1/2. In Chlamydia trachomatis serovar D (strain ATCC VR-885 / DSM 19411 / UW-3/Cx), this protein is Folate synthesis bifunctional protein (folKP).